Here is a 304-residue protein sequence, read N- to C-terminus: Olfactory receptor 8G2 (304 aa).

Over M1–F41 the chain is Extracellular. N-linked (GlcNAc...) asparagine glycosylation is present at N18. Residues L42 to I62 form a helical membrane-spanning segment. Topologically, residues G63–H69 are cytoplasmic. Residues T70 to I90 form a helical membrane-spanning segment. Residues T91–C110 are Extracellular-facing. A disulfide bridge links C110 with C192. Residues M111–V130 form a helical membrane-spanning segment. Residues T131–C154 are Cytoplasmic-facing. Residues F155 to F175 form a helical membrane-spanning segment. At M176–D193 the chain is on the extracellular side. The helical transmembrane segment at L194 to V214 threads the bilayer. Residues L215 to A217 lie on the Cytoplasmic side of the membrane. The helical transmembrane segment at F218–I238 threads the bilayer. Residues L239–H257 lie on the Extracellular side of the membrane. A helical membrane pass occupies residues I258–V278. Over S279–A304 the chain is Cytoplasmic.

The protein belongs to the G-protein coupled receptor 1 family.

Its subcellular location is the cell membrane. In terms of biological role, odorant receptor. The sequence is that of Olfactory receptor 8G2 from Homo sapiens (Human).